A 364-amino-acid polypeptide reads, in one-letter code: MFSHIHPDNYDAQLSKKQQDMAKLFSDFNLPAPDLYPSVPLNYRQRAEFRVWHEGDDLYYIMFDSKTKEKFRVDDFPVASELINNAMKALLATIKDQRELRFKLFQVDFLSTLSGELLISMLYHKPLEDNWQIEAEKLKAQLSTIAPVDIIGRAKKQKIIVDKDYVMESLNVGGKTYVYQQVENSFTQPNAGVNEQMLLWAQQATQNAGGDLIELYCGNGNFSIALAENFERVLGTEISKTSVRSAQINISENGIDNIDIVRMSSEEFSQAMNGERKFRRLEDFDLTTYNYDTVLVDPPRAGLDRDSVELVRRFNKIIYISCNPETLKDNLALLVETHQIDKFALFDQFPYTDHIETGVILTRK.

5 residues coordinate S-adenosyl-L-methionine: Gln-188, Tyr-216, Asn-221, Glu-237, and Asp-297. Residue Cys-322 is the Nucleophile of the active site. Glu-356 serves as the catalytic Proton acceptor.

The protein belongs to the class I-like SAM-binding methyltransferase superfamily. RNA M5U methyltransferase family. TrmA subfamily.

The catalysed reaction is uridine(54) in tRNA + S-adenosyl-L-methionine = 5-methyluridine(54) in tRNA + S-adenosyl-L-homocysteine + H(+). It catalyses the reaction uridine(341) in tmRNA + S-adenosyl-L-methionine = 5-methyluridine(341) in tmRNA + S-adenosyl-L-homocysteine + H(+). In terms of biological role, dual-specificity methyltransferase that catalyzes the formation of 5-methyluridine at position 54 (m5U54) in all tRNAs, and that of position 341 (m5U341) in tmRNA (transfer-mRNA). The sequence is that of tRNA/tmRNA (uracil-C(5))-methyltransferase from Colwellia psychrerythraea (strain 34H / ATCC BAA-681) (Vibrio psychroerythus).